The primary structure comprises 1209 residues: Major DNA-binding protein (1209 aa).

Residues Asn-290–Ser-312 are disordered. Residues Cys-503–His-516 fold into a zinc finger. Positions Phe-849–Trp-850 match the Required for filament formation motif. Residues Gln-1182–Leu-1209 form a required for nuclear localization region.

The protein belongs to the herpesviridae major DNA-binding protein family. Homooligomers. Forms double-helical filaments necessary for the formation of replication compartments within the host nucleus. Interacts with the origin-binding protein. Interacts with the helicase primase complex; this interaction stimulates primer synthesis activity of the helicase-primase complex. Interacts with the DNA polymerase. Interacts with the alkaline exonuclease; this interaction increases its nuclease processivity.

It localises to the host nucleus. Its function is as follows. Plays several crucial roles in viral infection. Participates in the opening of the viral DNA origin to initiate replication by interacting with the origin-binding protein. May disrupt loops, hairpins and other secondary structures present on ssDNA to reduce and eliminate pausing of viral DNA polymerase at specific sites during elongation. Promotes viral DNA recombination by performing strand-transfer, characterized by the ability to transfer a DNA strand from a linear duplex to a complementary single-stranded DNA circle. Can also catalyze the renaturation of complementary single strands. Additionally, reorganizes the host cell nucleus, leading to the formation of prereplicative sites and replication compartments. This process is driven by the protein which can form double-helical filaments in the absence of DNA. The polypeptide is Major DNA-binding protein (Equine herpesvirus 1 (strain Ab4p) (EHV-1)).